Consider the following 482-residue polypeptide: UDP-N-acetylmuramate--L-alanine ligase (482 aa).

An ATP-binding site is contributed by 115–121 (GTHGKTT).

It belongs to the MurCDEF family.

It localises to the cytoplasm. It catalyses the reaction UDP-N-acetyl-alpha-D-muramate + L-alanine + ATP = UDP-N-acetyl-alpha-D-muramoyl-L-alanine + ADP + phosphate + H(+). It functions in the pathway cell wall biogenesis; peptidoglycan biosynthesis. Its function is as follows. Cell wall formation. This Rhodospirillum centenum (strain ATCC 51521 / SW) protein is UDP-N-acetylmuramate--L-alanine ligase.